A 94-amino-acid chain; its full sequence is DNA-directed RNA polymerase subunit Rpo11 (94 aa).

The protein belongs to the archaeal Rpo11/eukaryotic RPB11/RPC19 RNA polymerase subunit family. Part of the RNA polymerase complex.

It is found in the cytoplasm. It carries out the reaction RNA(n) + a ribonucleoside 5'-triphosphate = RNA(n+1) + diphosphate. Its function is as follows. DNA-dependent RNA polymerase (RNAP) catalyzes the transcription of DNA into RNA using the four ribonucleoside triphosphates as substrates. The sequence is that of DNA-directed RNA polymerase subunit Rpo11 from Natronomonas pharaonis (strain ATCC 35678 / DSM 2160 / CIP 103997 / JCM 8858 / NBRC 14720 / NCIMB 2260 / Gabara) (Halobacterium pharaonis).